A 602-amino-acid chain; its full sequence is Sodium- and chloride-dependent GABA transporter 2 (602 aa).

Residues M1–E40 lie on the Cytoplasmic side of the membrane. Helical transmembrane passes span F41–L61, G68–L88, and I121–F141. Over S142 to W206 the chain is Extracellular. C153 and C162 form a disulfide bridge. N-linked (GlcNAc...) asparagine glycans are attached at residues N169 and N173. Transmembrane regions (helical) follow at residues E207–V227 and V233–V253. N269 is a glycosylation site (N-linked (GlcNAc...) asparagine). 7 helical membrane-spanning segments follow: residues A282 to S302, F319 to M339, V366 to L386, V418 to G438, G453 to A473, P490 to F510, and W528 to W548. Residues S549–H602 are Cytoplasmic-facing. T587 is subject to Phosphothreonine. Phosphoserine is present on S591.

This sequence belongs to the sodium:neurotransmitter symporter (SNF) (TC 2.A.22) family. SLC6A13 subfamily.

The protein localises to the cell membrane. The protein resides in the basolateral cell membrane. It carries out the reaction 4-aminobutanoate(out) + chloride(out) + 2 Na(+)(out) = 4-aminobutanoate(in) + chloride(in) + 2 Na(+)(in). The enzyme catalyses taurine(out) + chloride(out) + 2 Na(+)(out) = taurine(in) + chloride(in) + 2 Na(+)(in). The catalysed reaction is beta-alanine(out) + chloride(out) + 2 Na(+)(out) = beta-alanine(in) + chloride(in) + 2 Na(+)(in). It catalyses the reaction hypotaurine(out) + chloride(out) + 2 Na(+)(out) = hypotaurine(in) + chloride(in) + 2 Na(+)(in). Functionally, mediates sodium- and chloride-dependent transport of gamma-aminobutyric acid (GABA). Can also mediate transport of beta-alanine, taurine and hypotaurine. The sequence is that of Sodium- and chloride-dependent GABA transporter 2 (SLC6A13) from Bos taurus (Bovine).